Here is a 176-residue protein sequence, read N- to C-terminus: Neuroblastoma suppressor of tumorigenicity 1 (176 aa).

Residues 1-17 (MTVWLLIGFLLPVAIFA) form the signal peptide. Disulfide bonds link Cys-34–Cys-84, Cys-48–Cys-98, Cys-58–Cys-117, Cys-62–Cys-119, and Cys-81–Cys-122. The region spanning 34–123 (CEAKNITQIV…ILQCSCQACG (90 aa)) is the CTCK domain. The interval 148–176 (ETLGHHHHRPPAREEDSPAQSQREGESEE) is disordered.

It belongs to the DAN family. As to quaternary structure, interacts with bmp2; the interaction is blocked in presence of nog.

It localises to the secreted. Functionally, may act as a tumor suppressor. Cytokine that has an axial patterning activity. Acts like bone morpho-genetic protein (BMP) antagonist in embryonic explants. Blocks the bmp2 activity. This chain is Neuroblastoma suppressor of tumorigenicity 1 (nbl1), found in Xenopus tropicalis (Western clawed frog).